The chain runs to 233 residues: MFRIVKWLIALPVGIFIFFNAYVYGNIITYRAVAPHRTAFMSMRMKQFEQEGRDVALDYRWVPYNRISTNLKKALIASEDVRFAGHGGFDWDGIQNAIRRNRNSGEVKAGGSTISQQLAKNLFLNESRNYLRKGEEAAITAMMEAVTDKNRIFELYLNSIEWHYGVFGAEAASRYFYKKPAADLTKQQAAKLTALVPAPLYYADHPKSKRLRNKTNIVLRRMGSAELPESDTD.

The helical transmembrane segment at 8 to 28 (LIALPVGIFIFFNAYVYGNII) threads the bilayer.

Belongs to the glycosyltransferase 51 family.

It localises to the cell inner membrane. It catalyses the reaction [GlcNAc-(1-&gt;4)-Mur2Ac(oyl-L-Ala-gamma-D-Glu-L-Lys-D-Ala-D-Ala)](n)-di-trans,octa-cis-undecaprenyl diphosphate + beta-D-GlcNAc-(1-&gt;4)-Mur2Ac(oyl-L-Ala-gamma-D-Glu-L-Lys-D-Ala-D-Ala)-di-trans,octa-cis-undecaprenyl diphosphate = [GlcNAc-(1-&gt;4)-Mur2Ac(oyl-L-Ala-gamma-D-Glu-L-Lys-D-Ala-D-Ala)](n+1)-di-trans,octa-cis-undecaprenyl diphosphate + di-trans,octa-cis-undecaprenyl diphosphate + H(+). It participates in cell wall biogenesis; peptidoglycan biosynthesis. Functionally, peptidoglycan polymerase that catalyzes glycan chain elongation from lipid-linked precursors. In Neisseria gonorrhoeae (strain ATCC 700825 / FA 1090), this protein is Biosynthetic peptidoglycan transglycosylase.